Here is a 479-residue protein sequence, read N- to C-terminus: ATP synthase subunit beta (479 aa).

158–165 is an ATP binding site; that stretch reads GGAGLGKT.

It belongs to the ATPase alpha/beta chains family. As to quaternary structure, F-type ATPases have 2 components, CF(1) - the catalytic core - and CF(0) - the membrane proton channel. CF(1) has five subunits: alpha(3), beta(3), gamma(1), delta(1), epsilon(1). CF(0) has three main subunits: a(1), b(2) and c(9-12). The alpha and beta chains form an alternating ring which encloses part of the gamma chain. CF(1) is attached to CF(0) by a central stalk formed by the gamma and epsilon chains, while a peripheral stalk is formed by the delta and b chains.

The protein resides in the cell inner membrane. It catalyses the reaction ATP + H2O + 4 H(+)(in) = ADP + phosphate + 5 H(+)(out). Produces ATP from ADP in the presence of a proton gradient across the membrane. The catalytic sites are hosted primarily by the beta subunits. This chain is ATP synthase subunit beta, found in Rhodopirellula baltica (strain DSM 10527 / NCIMB 13988 / SH1).